A 32-amino-acid polypeptide reads, in one-letter code: Potassium channel toxin alpha-KTx 9.4 (32 aa).

Cystine bridges form between Cys3-Cys19, Cys6-Cys24, and Cys10-Cys26.

As to expression, expressed by the venom gland.

The protein resides in the secreted. In terms of biological role, blocker of human voltage-gated potassium channel Kv1.1/KCNA1. The protein is Potassium channel toxin alpha-KTx 9.4 of Hottentotta tamulus (Eastern Indian scorpion).